The primary structure comprises 103 residues: Large ribosomal subunit protein bL21 (103 aa).

This sequence belongs to the bacterial ribosomal protein bL21 family. As to quaternary structure, part of the 50S ribosomal subunit. Contacts protein L20.

Its function is as follows. This protein binds to 23S rRNA in the presence of protein L20. This chain is Large ribosomal subunit protein bL21, found in Legionella pneumophila (strain Paris).